Consider the following 115-residue polypeptide: Macrophage migration inhibitory factor homolog (115 aa).

The Proton acceptor; via imino nitrogen role is filled by P2. Substrate is bound by residues K33 and I65.

The protein belongs to the MIF family.

The protein resides in the secreted. It catalyses the reaction L-dopachrome = 5,6-dihydroxyindole-2-carboxylate. It carries out the reaction 3-phenylpyruvate = enol-phenylpyruvate. Tautomerization of the methyl ester of L-dopachrome. Inhibits migration of human peripheral blood mononuclear cells. In Brugia malayi (Filarial nematode worm), this protein is Macrophage migration inhibitory factor homolog.